Reading from the N-terminus, the 760-residue chain is Elongation factor G, mitochondrial (760 aa).

Residues 1–37 constitute a mitochondrion transit peptide; that stretch reads MIRGMLPRGLRALRPSVSPTVVSSSLHRNFHSSIRRF. A tr-type G domain is found at 68 to 349; that stretch reads SRLRNIGVSA…AVVDYLPQPN (282 aa). GTP contacts are provided by residues 77–84, 148–152, and 202–205; these read AHIDSGKT, DTPGH, and NKMD.

It belongs to the TRAFAC class translation factor GTPase superfamily. Classic translation factor GTPase family. EF-G/EF-2 subfamily.

The protein resides in the mitochondrion. Its pathway is protein biosynthesis; polypeptide chain elongation. Its function is as follows. Mitochondrial GTPase that catalyzes the GTP-dependent ribosomal translocation step during translation elongation. During this step, the ribosome changes from the pre-translocational (PRE) to the post-translocational (POST) state as the newly formed A-site-bound peptidyl-tRNA and P-site-bound deacylated tRNA move to the P and E sites, respectively. Catalyzes the coordinated movement of the two tRNA molecules, the mRNA and conformational changes in the ribosome. The chain is Elongation factor G, mitochondrial from Meyerozyma guilliermondii (strain ATCC 6260 / CBS 566 / DSM 6381 / JCM 1539 / NBRC 10279 / NRRL Y-324) (Yeast).